The sequence spans 170 residues: RNA pyrophosphohydrolase (170 aa).

The Nudix hydrolase domain maps to 6–149 (GFRPNVGIVI…KRDVYRRALK (144 aa)). The Nudix box signature appears at 38-59 (GGIDDGETPEQAMYRELYEEVG).

Belongs to the Nudix hydrolase family. RppH subfamily. A divalent metal cation is required as a cofactor.

Its function is as follows. Accelerates the degradation of transcripts by removing pyrophosphate from the 5'-end of triphosphorylated RNA, leading to a more labile monophosphorylated state that can stimulate subsequent ribonuclease cleavage. The protein is RNA pyrophosphohydrolase of Aliivibrio fischeri (strain ATCC 700601 / ES114) (Vibrio fischeri).